The chain runs to 204 residues: Phosphopantothenoylcysteine decarboxylase (204 aa).

FMN contacts are provided by residues Thr-53 and 104–107 (DANT). Asn-140 contributes to the substrate binding site. The active-site Proton donor is the Cys-173.

The protein belongs to the HFCD (homooligomeric flavin containing Cys decarboxylase) superfamily. In terms of assembly, homotrimer. FMN is required as a cofactor.

The catalysed reaction is N-[(R)-4-phosphopantothenoyl]-L-cysteine + H(+) = (R)-4'-phosphopantetheine + CO2. It functions in the pathway cofactor biosynthesis; coenzyme A biosynthesis; CoA from (R)-pantothenate: step 3/5. In terms of biological role, catalyzes the decarboxylation of the cysteine moiety of 4-phosphopantothenoylcysteine to form 4'-phosphopantotheine and this reaction forms part of the biosynthesis of coenzyme A. In Mus musculus (Mouse), this protein is Phosphopantothenoylcysteine decarboxylase (Ppcdc).